Here is a 92-residue protein sequence, read N- to C-terminus: Large ribosomal subunit protein eL43 (92 aa).

Residues Cys39, Cys42, Cys57, and Cys60 each coordinate Zn(2+). The C4-type zinc finger occupies 39 to 60; it reads CPNCGEDRVDRQGTGIWQCSYC.

The protein belongs to the eukaryotic ribosomal protein eL43 family. Putative zinc-binding subfamily. In terms of assembly, part of the 50S ribosomal subunit. Contacts protein L2. Requires Zn(2+) as cofactor.

Binds to the 23S rRNA. This Haloarcula marismortui (strain ATCC 43049 / DSM 3752 / JCM 8966 / VKM B-1809) (Halobacterium marismortui) protein is Large ribosomal subunit protein eL43.